We begin with the raw amino-acid sequence, 351 residues long: Succinylglutamate desuccinylase (351 aa).

3 residues coordinate Zn(2+): His-73, Glu-76, and His-168. Glu-231 is an active-site residue.

This sequence belongs to the AspA/AstE family. Succinylglutamate desuccinylase subfamily. The cofactor is Zn(2+).

The enzyme catalyses N-succinyl-L-glutamate + H2O = L-glutamate + succinate. The protein operates within amino-acid degradation; L-arginine degradation via AST pathway; L-glutamate and succinate from L-arginine: step 5/5. Functionally, transforms N(2)-succinylglutamate into succinate and glutamate. This is Succinylglutamate desuccinylase from Burkholderia lata (strain ATCC 17760 / DSM 23089 / LMG 22485 / NCIMB 9086 / R18194 / 383).